A 747-amino-acid chain; its full sequence is Protein O-mannosyl-transferase 1 (747 aa).

Transmembrane regions (helical) follow at residues 8-28 (PVVVTADINLSLVALTGMGLL), 40-60 (VVFDEVYYGQYISFYMKQIFF), 68-88 (FGHMVLALGGYLGGFDGNFLW), 99-119 (VPVWSLRLLPALAGALSVPMA), 122-142 (IVLELHFSHCAAMGAALLMLI), 154-174 (LLESVLIFFNLLAVLSYLKFF), 183-203 (SLSWWFWLTLTGVACSCAVGI), 206-226 (MGVFTYVLVLGVAAVHAWHLL), and 269-289 (LLVIPVVLYLLFFYVHLILVF). MIR domains lie at 318 to 381 (PLEV…VKDP), 392 to 449 (PRPV…LEIV), and 453 to 513 (SDTD…VEEH). N-linked (GlcNAc...) asparagine glycans are attached at residues Asn435, Asn471, and Asn539. 3 helical membrane passes run 597–617 (IVIWVSGSLALAIYALLSLWY), 636–656 (WVLAGALCAGGWAVNYLPFFL), and 661–681 (LFLYHYLPALTFQILLLPVVL).

The protein belongs to the glycosyltransferase 39 family. In terms of assembly, interacts with POMT2. Widely expressed. Highly expressed in testis, heart and pancreas. Detected at lower levels in kidney, skeletal muscle, brain, placenta, lung and liver.

The protein resides in the endoplasmic reticulum membrane. The catalysed reaction is a di-trans,poly-cis-dolichyl beta-D-mannosyl phosphate + L-seryl-[protein] = 3-O-(alpha-D-mannosyl)-L-seryl-[protein] + a di-trans,poly-cis-dolichyl phosphate + H(+). It catalyses the reaction a di-trans,poly-cis-dolichyl beta-D-mannosyl phosphate + L-threonyl-[protein] = 3-O-(alpha-D-mannosyl)-L-threonyl-[protein] + a di-trans,poly-cis-dolichyl phosphate + H(+). Its pathway is protein modification; protein glycosylation. Its activity is regulated as follows. Slightly activated by Mg(2+) and inhibited by both Ca(+) and Mn(2+). EDTA ha no effect on activity in vitro. Transfers mannosyl residues to the hydroxyl group of serine or threonine residues. Coexpression of both POMT1 and POMT2 is necessary for enzyme activity, expression of either POMT1 or POMT2 alone is insufficient. Essentially dedicated to O-mannosylation of alpha-DAG1 and few other proteins but not of cadherins and protocaherins. This is Protein O-mannosyl-transferase 1 (POMT1) from Homo sapiens (Human).